A 1163-amino-acid chain; its full sequence is Ankyrin repeat-containing protein F37A4.4 (1163 aa).

The ANK repeat unit spans residues 856–885; the sequence is YGNTALHVATRRGYQNLVEILIKHGADRSF. One can recognise a BRCT domain in the interval 929–1025; it reads LCVPEKFPVS…KLIEKDCDYL (97 aa).

The polypeptide is Ankyrin repeat-containing protein F37A4.4 (Caenorhabditis elegans).